A 61-amino-acid chain; its full sequence is Small ribosomal subunit protein uS14 (61 aa).

Residues C24, C27, C40, and C43 each coordinate Zn(2+).

It belongs to the universal ribosomal protein uS14 family. Zinc-binding uS14 subfamily. As to quaternary structure, part of the 30S ribosomal subunit. Contacts proteins S3 and S10. It depends on Zn(2+) as a cofactor.

Binds 16S rRNA, required for the assembly of 30S particles and may also be responsible for determining the conformation of the 16S rRNA at the A site. This is Small ribosomal subunit protein uS14 from Geobacillus thermodenitrificans (strain NG80-2).